Consider the following 529-residue polypeptide: Probable serine carboxypeptidase ARB_06414 (529 aa).

An N-terminal signal peptide occupies residues 1–19 (MRGLSYFVLALSAIDAAAA). The segment at 171–191 (PTDDNPSRPVGTGFSQGKPSV) is disordered. The active site involves Ser-225. N-linked (GlcNAc...) asparagine glycans are attached at residues Asn-284 and Asn-377. Asp-434 is a catalytic residue. N-linked (GlcNAc...) asparagine glycosylation is found at Asn-440 and Asn-448. The active site involves His-503.

The protein belongs to the peptidase S10 family.

It is found in the secreted. Removes acidic, neutral and basic amino acids as well as proline from the C-terminal position. The sequence is that of Probable serine carboxypeptidase ARB_06414 from Arthroderma benhamiae (strain ATCC MYA-4681 / CBS 112371) (Trichophyton mentagrophytes).